The following is a 272-amino-acid chain: Exosome complex component MTR3 (272 aa).

Positions 1 to 36 (MPGDHRRIRGPEESQPPQLYAADEEEAPGTRDPTRL) are disordered.

Belongs to the RNase PH family. In terms of assembly, component of the RNA exosome core complex (Exo-9), composed of EXOSC1, EXOSC2, EXOSC3, EXOSC4, EXOSC5, EXOSC6, EXOSC7, EXOSC8 and EXOSC9; within the complex interacts with EXOSC1, EXOSC7 and EXOSC8. The catalytically inactive Exo-9 may associate with the catalytic subunit EXOSC10/RRP6. Exo-9 may associate with DIS3 to form the nucleolar exosome complex, or DIS3L to form the cytoplasmic exosome complex. Exo-9 is formed by a hexameric base ring consisting of the heterodimers EXOSC4-EXOSC9, EXOSC5-EXOSC8 and EXOSC6-EXOSC7, and a cap ring consisting of EXOSC1, EXOSC2 and EXOSC3. The RNA exosome complex associates with cofactors EXOSC10/RRP6, C1D/RRP47, MPHOSPH6/MPP6 and MTREX/MTR4.

The protein localises to the cytoplasm. Its subcellular location is the nucleus. It is found in the nucleolus. In terms of biological role, non-catalytic component of the RNA exosome complex which has 3'-&gt;5' exoribonuclease activity and participates in a multitude of cellular RNA processing and degradation events. In the nucleus, the RNA exosome complex is involved in proper maturation of stable RNA species such as rRNA, snRNA and snoRNA, in the elimination of RNA processing by-products and non-coding 'pervasive' transcripts, such as antisense RNA species and promoter-upstream transcripts (PROMPTs), and of mRNAs with processing defects, thereby limiting or excluding their export to the cytoplasm. The RNA exosome may be involved in Ig class switch recombination (CSR) and/or Ig variable region somatic hypermutation (SHM) by targeting AICDA deamination activity to transcribed dsDNA substrates. In the cytoplasm, the RNA exosome complex is involved in general mRNA turnover and specifically degrades inherently unstable mRNAs containing AU-rich elements (AREs) within their 3' untranslated regions, and in RNA surveillance pathways, preventing translation of aberrant mRNAs. It seems to be involved in degradation of histone mRNA. The catalytic inactive RNA exosome core complex of 9 subunits (Exo-9) is proposed to play a pivotal role in the binding and presentation of RNA for ribonucleolysis, and to serve as a scaffold for the association with catalytic subunits and accessory proteins or complexes. The polypeptide is Exosome complex component MTR3 (EXOSC6) (Homo sapiens (Human)).